A 193-amino-acid chain; its full sequence is dTTP/UTP pyrophosphatase (193 aa).

Asp73 (proton acceptor) is an active-site residue.

The protein belongs to the Maf family. YhdE subfamily. It depends on a divalent metal cation as a cofactor.

The protein resides in the cytoplasm. It catalyses the reaction dTTP + H2O = dTMP + diphosphate + H(+). The catalysed reaction is UTP + H2O = UMP + diphosphate + H(+). Nucleoside triphosphate pyrophosphatase that hydrolyzes dTTP and UTP. May have a dual role in cell division arrest and in preventing the incorporation of modified nucleotides into cellular nucleic acids. In Caulobacter vibrioides (strain ATCC 19089 / CIP 103742 / CB 15) (Caulobacter crescentus), this protein is dTTP/UTP pyrophosphatase.